Consider the following 382-residue polypeptide: Anhydro-N-acetylmuramic acid kinase (382 aa).

9 to 16 (GTSLDGID) is a binding site for ATP.

This sequence belongs to the anhydro-N-acetylmuramic acid kinase family.

It catalyses the reaction 1,6-anhydro-N-acetyl-beta-muramate + ATP + H2O = N-acetyl-D-muramate 6-phosphate + ADP + H(+). It participates in amino-sugar metabolism; 1,6-anhydro-N-acetylmuramate degradation. The protein operates within cell wall biogenesis; peptidoglycan recycling. Functionally, catalyzes the specific phosphorylation of 1,6-anhydro-N-acetylmuramic acid (anhMurNAc) with the simultaneous cleavage of the 1,6-anhydro ring, generating MurNAc-6-P. Is required for the utilization of anhMurNAc either imported from the medium or derived from its own cell wall murein, and thus plays a role in cell wall recycling. The chain is Anhydro-N-acetylmuramic acid kinase from Bacillus thuringiensis subsp. konkukian (strain 97-27).